The following is a 374-amino-acid chain: 4-galactosyl-N-acetylglucosaminide 3-alpha-L-fucosyltransferase FUT5 (374 aa).

Residues 1 to 15 (MDPLGPAKPQWLWRR) lie on the Cytoplasmic side of the membrane. A helical; Signal-anchor for type II membrane protein transmembrane segment spans residues 16-34 (CLAGLLFQLLVAVCFFSYL). At 35–374 (RVSQDHATGS…TVRSIAAWFT (340 aa)) the chain is on the lumenal side. 4 N-linked (GlcNAc...) asparagine glycosylation sites follow: asparagine 60, asparagine 105, asparagine 167, and asparagine 198.

The protein belongs to the glycosyltransferase 10 family.

It is found in the golgi apparatus. Its subcellular location is the golgi stack membrane. It catalyses the reaction a beta-D-galactosyl-(1-&gt;3)-N-acetyl-beta-D-glucosaminyl derivative + GDP-beta-L-fucose = a beta-D-galactosyl-(1-&gt;3)-[alpha-L-fucosyl-(1-&gt;4)]-N-acetyl-beta-D-glucosaminyl derivative + GDP + H(+). The catalysed reaction is an N-acetyl-alpha-neuraminyl-(2-&gt;3)-beta-D-galactosyl-(1-&gt;4)-N-acetyl-beta-D-glucosaminyl derivative + GDP-beta-L-fucose = an alpha-Neu5Ac-(2-&gt;3)-beta-D-Gal-(1-&gt;4)-[alpha-L-Fuc-(1-&gt;3)]-beta-D-GlcNAc derivative + GDP + H(+). The enzyme catalyses an alpha-Neu5Ac-(2-&gt;3)-beta-D-Gal-(1-&gt;4)-beta-D-GlcNAc-(1-&gt;3)-beta-D-Gal-(1-&gt;4)-[alpha-L-Fuc-(1-&gt;3)]-beta-D-GlcNAc derivative + GDP-beta-L-fucose = an alpha-Neu5Ac-(2-&gt;3)-beta-D-Gal-(1-&gt;4)-[alpha-L-Fuc-(1-&gt;3)]-beta-D-GlcNAc-(1-&gt;3)-beta-D-Gal-(1-&gt;4)-[alpha-L-Fuc-(1-&gt;3)]-beta-D-GlcNAc derivative + GDP + H(+). It carries out the reaction a beta-D-galactosyl-(1-&gt;4)-N-acetyl-beta-D-glucosaminyl derivative + GDP-beta-L-fucose = a beta-D-galactosyl-(1-&gt;4)-[alpha-L-fucosyl-(1-&gt;3)]-N-acetyl-beta-D-glucosaminyl derivative + GDP + H(+). It catalyses the reaction a neolactoside nLc4Cer + GDP-beta-L-fucose = a neolactoside III(3)-alpha-Fuc-nLc4Cer + GDP + H(+). The catalysed reaction is a neolactoside nLc6Cer + GDP-beta-L-fucose = beta-D-galactosyl-(1-&gt;4)-N-acetyl-beta-D-glucosaminyl-(1-&gt;3)-beta-D-galactosyl-(1-&gt;4)-[alpha-L-fucosyl-(1-&gt;3)]-N-acetyl-beta-D-glucosaminyl-(1-&gt;3)-beta-D-galactosyl-(1-&gt;4)-beta-D-glucosyl-(1&lt;-&gt;1')-ceramide + GDP + H(+). The enzyme catalyses a neolactoside nLc6Cer(d18:1(4E)) + GDP-beta-L-fucose = a neolactoside III(3)-alpha-Fuc-nLc6Cer(d18:1(4E)) + GDP + H(+). It carries out the reaction a neolactoside nLc4Cer(d18:1(4E)) + GDP-beta-L-fucose = a neolactoside III(3)-alpha-Fuc-nLc4Cer(d18:1(4E)) + GDP + H(+). It catalyses the reaction a neolactoside VI(3)-alpha-NeuNAc-nLc6Cer + GDP-beta-L-fucose = a neolactoside VI(3)-alpha-NeuAc,III(3)-alphaFuc-nLc6Cer + GDP + H(+). The catalysed reaction is beta-D-galactosyl-(1-&gt;4)-N-acetyl-D-glucosamine + GDP-beta-L-fucose = beta-D-galactosyl-(1-&gt;4)-[alpha-L-fucosyl-(1-&gt;3)]-N-acetyl-D-glucosamine + GDP + H(+). The enzyme catalyses N-acetyl-alpha-neuraminosyl-(2-&gt;3)-beta-D-galactosyl-(1-&gt;4)-N-acetyl-beta-D-glucosamine + GDP-beta-L-fucose = N-acetyl-alpha-neuraminosyl-(2-&gt;3)-beta-D-galactosyl-(1-&gt;4)-[alpha-L-fucosyl-(1-&gt;3)]-N-acetyl-beta-D-glucosamine + GDP + H(+). It carries out the reaction alpha-L-Fuc-(1-&gt;2)-beta-D-Gal-(1-&gt;4)-D-GlcNAc + GDP-beta-L-fucose = alpha-L-Fuc-(1-&gt;2)-beta-D-Gal-(1-&gt;4)-[alpha-L-Fuc-(1-&gt;3)]-D-GlcNAc + GDP + H(+). It catalyses the reaction an alpha-Neu5Ac-(2-&gt;3)-beta-D-Gal-(1-&gt;3)-D-GlcNAc derivative + GDP-beta-L-fucose = an alpha-Neu5Ac-(2-&gt;3)-beta-D-Gal-(1-&gt;3)-[alpha-L-Fuc-(1-&gt;4)]-beta-D-GlcNAc derivative + GDP + H(+). It participates in protein modification; protein glycosylation. Functionally, catalyzes preferentially the transfer of L-fucose, from a guanosine diphosphate-beta-L-fucose, to the N-acetyl-beta-D-glucosamine (GlcNAc) of an N-acetyllactosamine unit (type 2 chain) of an oligosaccharide, or a glycoprotein- and a glycolipid-linked N-acetyllactosamine unit via an alpha (1,3) linkage and participates in the surface expression of VIM-2, Lewis X/SSEA-1 and sialyl Lewis X antigens. Preferentially transfers fucose to the GlcNAc of an internal N-acetyllactosamine unit of a poly-N-acetyllactosamine chain acceptor substrate. Also catalyzes to a lesser extend the transfer of L-fucose to the GlcNAc of a type 1 (beta-D-galactosyl-(1-&gt;3)-N-acetyl-beta-D-glucosaminyl) or H-type 1 (alpha-L-Fuc-(1-&gt;2)-beta-D-Gal-(1-&gt;3)-D-GlcNAc) chain oligosaccharide via an alpha (1,4) linkage. Preferentially catalyzes sialylated type 2 oligosaccharide acceptors over neutral type 2 or H type 2 (alpha-L-Fuc-(1-&gt;2)-beta-D-Gal-(1-&gt;4)-D-GlcNAc) oligosaccharide acceptors. Lactose-based structures are also acceptor substrates. This chain is 4-galactosyl-N-acetylglucosaminide 3-alpha-L-fucosyltransferase FUT5, found in Gorilla gorilla gorilla (Western lowland gorilla).